A 278-amino-acid chain; its full sequence is Non-heme chloroperoxidase (278 aa).

The region spanning 26-264 (PVVLIHGFPL…GAPHGLLWTH (239 aa)) is the AB hydrolase-1 domain. Catalysis depends on residues Ser99, Asp229, and His258.

It belongs to the AB hydrolase superfamily. Bacterial non-heme haloperoxidase / perhydrolase family. As to quaternary structure, homodimer.

The sequence is that of Non-heme chloroperoxidase (cpo) from Kitasatospora aureofaciens (Streptomyces aureofaciens).